The chain runs to 612 residues: Protein MUK1 (612 aa).

A compositionally biased stretch (basic and acidic residues) spans 40–50 (EDQNDNERSSC). Residues 40-66 (EDQNDNERSSCDGDENSTTGERLENNK) are disordered. Positions 55 to 66 (NSTTGERLENNK) are enriched in polar residues. Residues serine 67, serine 163, serine 185, and serine 245 each carry the phosphoserine modification. Residues 273-414 (TEYNKLLNEK…VEGLTKNDFS (142 aa)) form the VPS9 domain. The segment at 494–560 (IRSYTPPHPN…SSASLEHGNR (67 aa)) is disordered. Positions 503-517 (NNTSNNNLHSSNNLN) are enriched in low complexity. A compositionally biased stretch (polar residues) spans 518 to 529 (IPRSSSQLSMEL). Over residues 530–542 (SNRDTTEMSRDGS) the composition is skewed to basic and acidic residues. Over residues 543 to 554 (RSTSSSSRSSAS) the composition is skewed to low complexity.

The protein resides in the cytoplasm. Functionally, putative GTPase-activating protein. The protein is Protein MUK1 (MUK1) of Saccharomyces cerevisiae (strain ATCC 204508 / S288c) (Baker's yeast).